The primary structure comprises 573 residues: MTNCKGRSTITKTNSKVHDREGFVNWTISLSTVQSDKFLNLLLSMVPVVYQINQDERHKKVNGVWQDGLQPAGHNYNVKSDQHVEYHHFSEQTFHGSNGHSPSSCSPKYDDFSSYNYCDGMDASETDAMLQEDNISSDSNEDIIVEGIRKQPKESSSIMALQILVPFLLAGFGTVTAGMVLDIVQHWDVFKNVTEVFILVPALLGLKGNLEMTLASRLSTAVNIGKMDSPIEKWNLIIGNLALKQVQATVVGFLAAVAAVILGWIPEGKYSFSHSILLCSSSVATAFIASLLQGIIMVGVIVGSKKTGINPDNVATPIAASFGDLITLAILAWISQGLYTCLETYYYVSPLVGAFFLALTPMGIVIAAKHPATRTVLHSGWEPVITAMIISSIGGLILDTTVSDPNLVGIVVYTPVINGIGGNLVAIQASRISTYLHLHSIPGELPEEAKGCYYPCRTYYGTGVNNKSAQVLLLLVIPGHLIFLYTIHLMKSGHTSLTPIFIAVYLFAALLQVFTLLWIADWMVHHFWKKGKDPDSFSIPYLTALGDLLGTALLAVGFHFLWLIGDRDGDVGD.

Over M1–Q162 the chain is Extracellular. The helical transmembrane segment at I163 to I183 threads the bilayer. Topologically, residues V184–E195 are cytoplasmic. The helical transmembrane segment at V196–S216 threads the bilayer. Topologically, residues R217–Q245 are extracellular. Residues V246–P266 traverse the membrane as a helical segment. Residues E267 to S282 are Cytoplasmic-facing. A helical membrane pass occupies residues V283–G303. Topologically, residues S304–N313 are extracellular. Residues V314–I334 form a helical membrane-spanning segment. Residues S335–Y347 are Cytoplasmic-facing. Residues V348 to A368 traverse the membrane as a helical segment. Residues K369 to V376 lie on the Extracellular side of the membrane. The chain crosses the membrane as a helical span at residues L377–I397. The Cytoplasmic segment spans residues L398–N406. Residues L407 to I427 traverse the membrane as a helical segment. At Q428 to A469 the chain is on the extracellular side. A helical membrane pass occupies residues Q470–M490. The Cytoplasmic portion of the chain corresponds to K491–P499. Residues I500–A520 traverse the membrane as a helical segment. Topologically, residues D521–T543 are extracellular. The helical transmembrane segment at A544–I564 threads the bilayer. The Cytoplasmic portion of the chain corresponds to G565–D573.

It belongs to the SLC41A transporter family.

It is found in the cell membrane. The catalysed reaction is Mg(2+)(in) = Mg(2+)(out). It catalyses the reaction Mn(2+)(in) = Mn(2+)(out). The enzyme catalyses Co(2+)(in) = Co(2+)(out). It carries out the reaction Ni(2+)(in) = Ni(2+)(out). The catalysed reaction is Fe(2+)(in) = Fe(2+)(out). In terms of biological role, acts as a plasma-membrane magnesium transporter. Can also mediate the transport of other divalent metal cations in an order of Ba(2+) &gt; Ni(2+) &gt; Co(2+) &gt; Fe(2+) &gt; Mn(2+). In Gallus gallus (Chicken), this protein is Solute carrier family 41 member 2 (SLC41A2).